We begin with the raw amino-acid sequence, 379 residues long: Cytochrome b (379 aa).

The next 4 helical transmembrane spans lie at Phe-33–Met-53, Trp-77–Val-98, Trp-113–Leu-133, and Phe-178–Leu-198. Residues His-83 and His-97 each coordinate heme b. Residues His-182 and His-196 each coordinate heme b. An a ubiquinone-binding site is contributed by His-201. The next 4 membrane-spanning stretches (helical) occupy residues Thr-226–Phe-246, Leu-288–Asn-308, Val-320–Gly-340, and Phe-347–Pro-367.

It belongs to the cytochrome b family. As to quaternary structure, the cytochrome bc1 complex contains 11 subunits: 3 respiratory subunits (MT-CYB, CYC1 and UQCRFS1), 2 core proteins (UQCRC1 and UQCRC2) and 6 low-molecular weight proteins (UQCRH/QCR6, UQCRB/QCR7, UQCRQ/QCR8, UQCR10/QCR9, UQCR11/QCR10 and a cleavage product of UQCRFS1). This cytochrome bc1 complex then forms a dimer. Heme b is required as a cofactor.

Its subcellular location is the mitochondrion inner membrane. Functionally, component of the ubiquinol-cytochrome c reductase complex (complex III or cytochrome b-c1 complex) that is part of the mitochondrial respiratory chain. The b-c1 complex mediates electron transfer from ubiquinol to cytochrome c. Contributes to the generation of a proton gradient across the mitochondrial membrane that is then used for ATP synthesis. This chain is Cytochrome b (MT-CYB), found in Akodon paranaensis (Parana grass mouse).